A 295-amino-acid polypeptide reads, in one-letter code: Hepatic leukemia factor (295 aa).

Positions 34–52 (LHPEDAFSKDRDKGKKLDD) are enriched in basic and acidic residues. 2 disordered regions span residues 34–69 (LHPE…GPTL) and 93–160 (SENG…NRNT). Residues 225-288 (DDKYWARRRK…GKCKNILAKY (64 aa)) form the bZIP domain. The segment at 227–247 (KYWARRRKNNMAAKRSRDARR) is basic motif. Residues 248 to 255 (LKENQIAI) form a leucine-zipper region.

The protein belongs to the bZIP family. PAR subfamily. Binds DNA specifically as homodimer or heterodimer with other PAR factors. As to expression, isoform HLF43 is abundant in brain, liver and kidney. Isoform HLF36 is expressed only in the liver. Both isoforms accumulate in the liver with different circadian amplitudes. Isoform HLF36 reaches peak expression levels between 8 and 12 p.m. Isoform HLF43 displays a more pronounced fluctuation through the day.

It localises to the nucleus. The chain is Hepatic leukemia factor (Hlf) from Rattus norvegicus (Rat).